We begin with the raw amino-acid sequence, 446 residues long: Glutamyl-tRNA reductase (446 aa).

Substrate is bound by residues Thr49–Arg52, Ser108, Glu113–Gln115, and Gln119. Cys50 functions as the Nucleophile in the catalytic mechanism. NADP(+) is bound at residue Gly188–Ser193.

This sequence belongs to the glutamyl-tRNA reductase family. As to quaternary structure, homodimer.

It catalyses the reaction (S)-4-amino-5-oxopentanoate + tRNA(Glu) + NADP(+) = L-glutamyl-tRNA(Glu) + NADPH + H(+). It participates in porphyrin-containing compound metabolism; protoporphyrin-IX biosynthesis; 5-aminolevulinate from L-glutamyl-tRNA(Glu): step 1/2. Catalyzes the NADPH-dependent reduction of glutamyl-tRNA(Glu) to glutamate 1-semialdehyde (GSA). The polypeptide is Glutamyl-tRNA reductase (Desulforudis audaxviator (strain MP104C)).